Reading from the N-terminus, the 412-residue chain is MGPRFQPDDTLYKRRNTLKVEYVPDDIVGRDNEIEEYEAALQPIINGEYPDNIFIYGKTGVGKTAVTNFLLNELRESADHFEVDLTVISLNCDGLSTSYQAAISLVNNLRGHENHIAETGHPQSKVYRLLWNELNKLSGSVIIVLDEIDHITDDTFLYQITRADNNGYIDNIQLGVIGISNDSTFREQLDAKVQSSLCETEISFPPYGTEELQKVLEQRAEIAFHESALEDGVIPLCAALGRQDGGDARRAITLLRKAGDLARTENANSVTTDHVERAQEKLEAQQSMDIMRDLTEHEQLTLYALTTLAAEGETPARSRIVYQRYKELCEFQGREPRTARRMRSFLSDFEILNLTLSEMEHRGQDGGTYRQHELNRDIATVVDALQTIIGEFGAHQSIIEYLPDSGEEFATM.

Residues 61–65, Y207, and R219 contribute to the ATP site; that span reads VGKTA.

The protein belongs to the CDC6/cdc18 family.

Involved in regulation of DNA replication. The polypeptide is ORC1-type DNA replication protein 2 (cdc6b) (Haloarcula marismortui (strain ATCC 43049 / DSM 3752 / JCM 8966 / VKM B-1809) (Halobacterium marismortui)).